A 364-amino-acid polypeptide reads, in one-letter code: DNA polymerase IV (364 aa).

Residues Ile6–Gly186 form the UmuC domain. Asp10 and Asp104 together coordinate Mg(2+). Glu105 is a catalytic residue.

This sequence belongs to the DNA polymerase type-Y family. As to quaternary structure, monomer. Mg(2+) is required as a cofactor.

The protein localises to the cytoplasm. It carries out the reaction DNA(n) + a 2'-deoxyribonucleoside 5'-triphosphate = DNA(n+1) + diphosphate. Its function is as follows. Poorly processive, error-prone DNA polymerase involved in untargeted mutagenesis. Copies undamaged DNA at stalled replication forks, which arise in vivo from mismatched or misaligned primer ends. These misaligned primers can be extended by PolIV. Exhibits no 3'-5' exonuclease (proofreading) activity. May be involved in translesional synthesis, in conjunction with the beta clamp from PolIII. This is DNA polymerase IV from Bacteroides fragilis (strain YCH46).